The sequence spans 532 residues: Muscarinic acetylcholine receptor M5 (532 aa).

The Extracellular portion of the chain corresponds to 1–29; the sequence is MEGESYHNETTVNGTPVNHQALERHGLWE. The N-linked (GlcNAc...) asparagine glycan is linked to Asn8. The chain crosses the membrane as a helical span at residues 30 to 53; that stretch reads VITIAAVTAVVSLMTIVGNVLVMI. At 54-66 the chain is on the cytoplasmic side; sequence SFKVNSQLKTVNN. Residues 67-87 form a helical membrane-spanning segment; that stretch reads YYLLSLACADLIIGIFSMNLY. The Extracellular portion of the chain corresponds to 88–104; the sequence is TTYILMGRWVLGSLACD. An intrachain disulfide couples Cys103 to Cys183. Residues 105 to 126 form a helical membrane-spanning segment; the sequence is LWLALDYVASNASVMNLLVISF. The Cytoplasmic portion of the chain corresponds to 127 to 146; the sequence is DRYFSITRPLTYRAKRTPKR. The chain crosses the membrane as a helical span at residues 147 to 169; that stretch reads AGIMIGLAWLVSFILWAPAILCW. The Extracellular portion of the chain corresponds to 170 to 191; the sequence is QYLVGKRTVPPDECQIQFLSEP. The helical transmembrane segment at 192 to 214 threads the bilayer; that stretch reads TITFGTAIAAFYIPVSVMTILYC. The Cytoplasmic portion of the chain corresponds to 215 to 443; sequence RIYRETEKRT…LVKERKAAQT (229 aa). Residues 265 to 290 are disordered; that stretch reads VRNQASWSSSRRSTSTTGKPTQATDL. A compositionally biased stretch (low complexity) spans 270-281; sequence SWSSSRRSTSTT. A helical membrane pass occupies residues 444-464; the sequence is LSAILLAFIITWTPYNIMVLV. Topologically, residues 465 to 478 are extracellular; it reads STFCDKCVPVTLWH. The helical transmembrane segment at 479–498 threads the bilayer; the sequence is LGYWLCYVNSTINPICYALC. Residues 499–532 lie on the Cytoplasmic side of the membrane; sequence NRTFRKTFKLLLLCRWKKKKVEEKLYWQGNSKLP. Phosphothreonine occurs at positions 501 and 505.

It belongs to the G-protein coupled receptor 1 family. Muscarinic acetylcholine receptor subfamily. CHRM5 sub-subfamily.

The protein resides in the cell membrane. It localises to the postsynaptic cell membrane. Functionally, the muscarinic acetylcholine receptor mediates various cellular responses, including inhibition of adenylate cyclase, breakdown of phosphoinositides and modulation of potassium channels through the action of G proteins. Primary transducing effect is Pi turnover. This is Muscarinic acetylcholine receptor M5 (Chrm5) from Mus musculus (Mouse).